The sequence spans 305 residues: Homoserine O-acetyltransferase (305 aa).

The active-site Acyl-thioester intermediate is cysteine 142. 2 residues coordinate substrate: lysine 163 and serine 192. The active-site Proton acceptor is histidine 235. Residue glutamate 237 is part of the active site. Arginine 249 contributes to the substrate binding site.

The protein belongs to the MetA family.

The protein resides in the cytoplasm. It carries out the reaction L-homoserine + acetyl-CoA = O-acetyl-L-homoserine + CoA. Its pathway is amino-acid biosynthesis; L-methionine biosynthesis via de novo pathway; O-acetyl-L-homoserine from L-homoserine: step 1/1. Functionally, transfers an acetyl group from acetyl-CoA to L-homoserine, forming acetyl-L-homoserine. This Bacteroides thetaiotaomicron (strain ATCC 29148 / DSM 2079 / JCM 5827 / CCUG 10774 / NCTC 10582 / VPI-5482 / E50) protein is Homoserine O-acetyltransferase.